A 134-amino-acid chain; its full sequence is Ribosome-binding factor A (134 aa).

It belongs to the RbfA family. In terms of assembly, monomer. Binds 30S ribosomal subunits, but not 50S ribosomal subunits or 70S ribosomes.

Its subcellular location is the cytoplasm. Its function is as follows. One of several proteins that assist in the late maturation steps of the functional core of the 30S ribosomal subunit. Associates with free 30S ribosomal subunits (but not with 30S subunits that are part of 70S ribosomes or polysomes). Required for efficient processing of 16S rRNA. May interact with the 5'-terminal helix region of 16S rRNA. This Baumannia cicadellinicola subsp. Homalodisca coagulata protein is Ribosome-binding factor A.